Consider the following 388-residue polypeptide: Regulator of G-protein signaling 20 (388 aa).

The disordered stretch occupies residues 138–199; it reads PGRPSGGRPL…TPGAAPGQPG (62 aa). A compositionally biased stretch (low complexity) spans 185 to 197; that stretch reads PAAQDTPGAAPGQ. Residues 262–378 form the RGS domain; it reads SFDKLMVTPA…MNSAVYKDLL (117 aa).

Forms a complex with G(alpha)z/i2 subunits and mu-opioid receptors; the formation of this complex results in mu-opioid receptor desensitization. Interacts with OPRM1. In terms of processing, fatty acylated. Heavily palmitoylated in the cysteine string motif. Post-translationally, N- and O-glycosylated in synapsomal membranes. Serine phosphorylated in synapsomal membranes. In terms of processing, sumoylated with SUMO1 and SUMO2 in synaptosomes. The sumoylated forms act as a scaffold for sequestering mu-opioid receptor-activated G(alpha) subunits. In terms of tissue distribution, isoform 5 is expressed in brain at high levels in the caudate nucleus and temporal lobe.

The protein resides in the membrane. Its subcellular location is the nucleus. It is found in the cytoplasm. Its function is as follows. Inhibits signal transduction by increasing the GTPase activity of G protein alpha subunits thereby driving them into their inactive GDP-bound form. Binds selectively to G(z)-alpha and G(alpha)-i2 subunits, accelerates their GTPase activity and regulates their signaling activities. The G(z)-alpha activity is inhibited by the phosphorylation and palmitoylation of the G-protein. Negatively regulates mu-opioid receptor-mediated activation of the G-proteins. The chain is Regulator of G-protein signaling 20 (RGS20) from Homo sapiens (Human).